The sequence spans 448 residues: Proline iminopeptidase aneH (448 aa).

In terms of domain architecture, AB hydrolase-1 spans 64 to 191 (PWMLYLQGGP…VEVFIGGGPC (128 aa)). Catalysis depends on Ser-164, which acts as the Nucleophile. Asp-397 is an active-site residue. Residue His-425 is the Proton donor of the active site.

This sequence belongs to the peptidase S33 family. As to quaternary structure, homooligomer.

It localises to the cytoplasm. It catalyses the reaction Release of N-terminal proline from a peptide.. Its pathway is secondary metabolite biosynthesis. Its function is as follows. Proline iminopeptidase; part of the gene cluster that mediates the biosynthesis of aculenes, a unique type of norsesquiterpenes that contain a nordaucane skeleton linked to an L-proline moiety and are of mixed biosynthetic origin. The pathway begins with the synthesis of dauca-4,7-diene by the terpene cyclase aneC using farnesyl pyrophosphate (FPP) as substrate. The cytochrome P450 monooxygenase aneF then performs the initial oxidation at C-12 of dauca-4,7-diene to yield asperaculane D. Asperaculane D is substrate of the cytochrome P450 monooxygenase aneD for C-10 hydroxylation to yield asperaculane E. The cytochrome P450 monooxygenase aneG then converts asperaculane E into aculene D via C-2 oxidation. The monomodular nonribosomal peptide synthtase aneB adenylates L-proline and the thiohydrolase aneE transfers this activated L-proline derivative to aculenes D and C to produce respectively aculenes B and A. The dioxygenase aneA converts aculene D into aculene C, and aculene B into aculene A by introducing the 5,6-alkene moiety. Asperculanes A, B, C and F, as well as 14-prolyl asperculane C, might be shunt products of the pathway. This Aspergillus aculeatus (strain ATCC 16872 / CBS 172.66 / WB 5094) protein is Proline iminopeptidase aneH.